An 894-amino-acid chain; its full sequence is Low-affinity phosphate transporter PHO91 (894 aa).

The SPX domain maps to 1 to 256 (MKFSHSLQFN…NTNLKQNYLN (256 aa)). Disordered regions lie at residues 124–160 (QHQLQSVARNRKSKSQQRQRRFSSVSSTDSNPSLTDM) and 293–321 (RPSNTFNLDADRINNDENSSGNEEDEDGN). Residues 132 to 144 (RNRKSKSQQRQRR) are compositionally biased toward basic residues. Residues 151-160 (TDSNPSLTDM) are compositionally biased toward polar residues. 3 positions are modified to phosphoserine: Ser-295, Ser-311, and Ser-312. 13 consecutive transmembrane segments (helical) span residues 430–450 (LKFLLITSCFIALLTFNLTPF), 474–494 (TIPLFVTSLMIPLLIVVFPVI), 511–531 (FILSTMWSSVIMLLLGGFTLA), 557–577 (FILLTNMFVALFVSMWVSNVA), 602–622 (ALILGIALASNIGGMSSPIAS), 642–662 (FMIALPVCFICVMAIWVLLII), 682–702 (FTLKQWFVTLVCIITIVLWCL), 706–726 (ISGIFGEMGIISIIPIVVFFG), 738–758 (FMWTIVVLAMGGTTLGKAVSS), 777–797 (PIFIIVLIFGLVILVMATFVS), 799–819 (TVAAMIIVPLMSEIGSNLPSG), 824–844 (LLIVIAALLCSSAMGLPTSGF), and 874–894 (SLLSYAAIVTVGYGILKVMGF).

It belongs to the CitM (TC 2.A.11) transporter family. Post-translationally, ubiquitinated by RSP5. RSP5-mediated ubiquitination initiates internalization and degradation by the endocytic pathway.

It localises to the vacuole membrane. Its function is as follows. Vacuolar phosphate transporter that probably exports phosphate from the vacuolar lumen to the cytosol. The sequence is that of Low-affinity phosphate transporter PHO91 (PHO91) from Saccharomyces cerevisiae (strain ATCC 204508 / S288c) (Baker's yeast).